The primary structure comprises 353 residues: Photosystem II protein D1 (353 aa).

At threonine 2 the chain carries N-acetylthreonine. A Phosphothreonine modification is found at threonine 2. The next 3 membrane-spanning stretches (helical) occupy residues 29–46 (YIGW…TATS), 118–133 (HFLL…EWEL), and 142–156 (WIAV…AATA). A chlorophyll a-binding site is contributed by histidine 118. Tyrosine 126 serves as a coordination point for pheophytin a. The [CaMn4O5] cluster site is built by aspartate 170 and glutamate 189. The chain crosses the membrane as a helical span at residues 197–218 (FHMLGVAGVFGGSLFSAMHGSL). Residue histidine 198 participates in chlorophyll a binding. A quinone-binding positions include histidine 215 and 264–265 (SF). Histidine 215 is a Fe cation binding site. Histidine 272 contacts Fe cation. Residues 274–288 (FLAAWPVVGIWFTAL) traverse the membrane as a helical segment. Residues histidine 332, glutamate 333, aspartate 342, and alanine 344 each contribute to the [CaMn4O5] cluster site. Residues 345–353 (AIEAPSTNG) constitute a propeptide that is removed on maturation.

It belongs to the reaction center PufL/M/PsbA/D family. In terms of assembly, PSII is composed of 1 copy each of membrane proteins PsbA, PsbB, PsbC, PsbD, PsbE, PsbF, PsbH, PsbI, PsbJ, PsbK, PsbL, PsbM, PsbT, PsbX, PsbY, PsbZ, Psb30/Ycf12, at least 3 peripheral proteins of the oxygen-evolving complex and a large number of cofactors. It forms dimeric complexes. It depends on The D1/D2 heterodimer binds P680, chlorophylls that are the primary electron donor of PSII, and subsequent electron acceptors. It shares a non-heme iron and each subunit binds pheophytin, quinone, additional chlorophylls, carotenoids and lipids. D1 provides most of the ligands for the Mn4-Ca-O5 cluster of the oxygen-evolving complex (OEC). There is also a Cl(-1) ion associated with D1 and D2, which is required for oxygen evolution. The PSII complex binds additional chlorophylls, carotenoids and specific lipids. as a cofactor. Tyr-161 forms a radical intermediate that is referred to as redox-active TyrZ, YZ or Y-Z. Post-translationally, C-terminally processed by CTPA; processing is essential to allow assembly of the oxygen-evolving complex and thus photosynthetic growth.

The protein localises to the plastid. It is found in the chloroplast thylakoid membrane. It carries out the reaction 2 a plastoquinone + 4 hnu + 2 H2O = 2 a plastoquinol + O2. Functionally, photosystem II (PSII) is a light-driven water:plastoquinone oxidoreductase that uses light energy to abstract electrons from H(2)O, generating O(2) and a proton gradient subsequently used for ATP formation. It consists of a core antenna complex that captures photons, and an electron transfer chain that converts photonic excitation into a charge separation. The D1/D2 (PsbA/PsbD) reaction center heterodimer binds P680, the primary electron donor of PSII as well as several subsequent electron acceptors. This is Photosystem II protein D1 from Citrus sinensis (Sweet orange).